A 112-amino-acid chain; its full sequence is Nitrogen regulatory protein GlnK2 (112 aa).

ADP contacts are provided by residues Thr-29, 37 to 39, Val-64, and 87 to 90; these read GVQ and GDGK. ATP contacts are provided by residues Thr-29, 37-39, Val-64, and 87-90; these read GVQ and GDGK.

Belongs to the P(II) protein family. Homotrimer. Interacts and forms a complex with Amt2.

Its subcellular location is the cytoplasm. Functionally, involved in the regulation of nitrogen metabolism. Regulates the activity of its targets by protein-protein interaction in response to the nitrogen status of the cell. Regulates the activity of the ammonia channel Amt2 via direct interaction. The protein is Nitrogen regulatory protein GlnK2 of Methanocaldococcus jannaschii (strain ATCC 43067 / DSM 2661 / JAL-1 / JCM 10045 / NBRC 100440) (Methanococcus jannaschii).